The chain runs to 244 residues: Transcriptional activator protein PhzR (244 aa).

In terms of domain architecture, HTH luxR-type spans Ala177 to Gly242. The H-T-H motif DNA-binding region spans Ser201–Arg220.

The protein belongs to the autoinducer-regulated transcriptional regulatory protein family.

In terms of biological role, positive regulator of phenazine antibiotic production. May activate the phenazine biosynthetic genes by binding to a DNA sequence upstream of them, or to an intermediate gene which, in turn, interacts with them. The polypeptide is Transcriptional activator protein PhzR (phzR) (Pseudomonas fluorescens).